The primary structure comprises 418 residues: AP-1 complex subunit mu (418 aa).

The MHD domain occupies 176-417 (NNEAYFDVTE…VTKAGKFQVR (242 aa)).

This sequence belongs to the adaptor complexes medium subunit family. Adaptor protein complex 1 (AP-1) is a heterotetramer composed of two large adaptins (gamma- and beta'-type subunits), a medium adaptin (mu-type subunit AP47) and a small adaptin (sigma-type subunit AP19). In terms of processing, regulated by phosphorylation.

Its subcellular location is the golgi apparatus. The protein resides in the cytoplasmic vesicle. It is found in the clathrin-coated vesicle membrane. Component of the adapter complexes which link clathrin to receptors in coated vesicles. Clathrin-associated protein complexes are believed to interact with the cytoplasmic tails of membrane proteins, leading to their selection and concentration. AP47 is a subunit of the plasma membrane adapter. This is AP-1 complex subunit mu from Diplobatis ommata (Ocellated electric ray).